The following is a 229-amino-acid chain: Ribonuclease 3 (229 aa).

One can recognise an RNase III domain in the interval 5 to 127; the sequence is LSRLERQLGY…LIGAIYLDAG (123 aa). A Mg(2+)-binding site is contributed by Glu-40. Asp-44 is an active-site residue. Asp-113 and Glu-116 together coordinate Mg(2+). Glu-116 is an active-site residue. The 71-residue stretch at 154–224 folds into the DRBM domain; the sequence is DPKTRLQEFL…AAAALIALGV (71 aa).

It belongs to the ribonuclease III family. In terms of assembly, homodimer. Requires Mg(2+) as cofactor.

It localises to the cytoplasm. The catalysed reaction is Endonucleolytic cleavage to 5'-phosphomonoester.. In terms of biological role, digests double-stranded RNA. Involved in the processing of primary rRNA transcript to yield the immediate precursors to the large and small rRNAs (23S and 16S). Processes some mRNAs, and tRNAs when they are encoded in the rRNA operon. Processes pre-crRNA and tracrRNA of type II CRISPR loci if present in the organism. This chain is Ribonuclease 3, found in Pseudomonas syringae pv. tomato (strain ATCC BAA-871 / DC3000).